The following is a 305-amino-acid chain: Acetyl-coenzyme A carboxylase carboxyl transferase subunit beta (305 aa).

The 270-residue stretch at 27–296 folds into the CoA carboxyltransferase N-terminal domain; that stretch reads LWVKCSSCRE…SPAKAELAGR (270 aa). Residues cysteine 31, cysteine 34, cysteine 50, and cysteine 53 each contribute to the Zn(2+) site. A C4-type zinc finger spans residues 31 to 53; sequence CSSCRELIYKKQLNDNLKVCPKC.

The protein belongs to the AccD/PCCB family. Acetyl-CoA carboxylase is a heterohexamer composed of biotin carboxyl carrier protein (AccB), biotin carboxylase (AccC) and two subunits each of ACCase subunit alpha (AccA) and ACCase subunit beta (AccD). Requires Zn(2+) as cofactor.

Its subcellular location is the cytoplasm. It carries out the reaction N(6)-carboxybiotinyl-L-lysyl-[protein] + acetyl-CoA = N(6)-biotinyl-L-lysyl-[protein] + malonyl-CoA. Its pathway is lipid metabolism; malonyl-CoA biosynthesis; malonyl-CoA from acetyl-CoA: step 1/1. Component of the acetyl coenzyme A carboxylase (ACC) complex. Biotin carboxylase (BC) catalyzes the carboxylation of biotin on its carrier protein (BCCP) and then the CO(2) group is transferred by the transcarboxylase to acetyl-CoA to form malonyl-CoA. The protein is Acetyl-coenzyme A carboxylase carboxyl transferase subunit beta of Chloroflexus aurantiacus (strain ATCC 29366 / DSM 635 / J-10-fl).